The sequence spans 250 residues: Urease accessory protein UreG 3 (250 aa).

The tract at residues 1–24 is disordered; sequence MPDNASAQQPGQPAQGPNEHYHQP. Positions 7–17 are enriched in low complexity; that stretch reads AQQPGQPAQGP. 37–44 is a GTP binding site; sequence GPVGTGKS. The interval 230 to 250 is disordered; it reads GTHVPTDPGPMAPHSHSHDGS.

Belongs to the SIMIBI class G3E GTPase family. UreG subfamily. In terms of assembly, homodimer. UreD, UreF and UreG form a complex that acts as a GTP-hydrolysis-dependent molecular chaperone, activating the urease apoprotein by helping to assemble the nickel containing metallocenter of UreC. The UreE protein probably delivers the nickel.

It is found in the cytoplasm. Its function is as follows. Facilitates the functional incorporation of the urease nickel metallocenter. This process requires GTP hydrolysis, probably effectuated by UreG. This chain is Urease accessory protein UreG 3, found in Streptomyces griseus subsp. griseus (strain JCM 4626 / CBS 651.72 / NBRC 13350 / KCC S-0626 / ISP 5235).